Reading from the N-terminus, the 650-residue chain is Phosphatidylinositol 4-kinase gamma 7 (650 aa).

One can recognise a Ubiquitin-like; degenerate domain in the interval 46-103 (RRVFVQTETGCVLGMELDRSDNVHTVKRRLQIALNFPTEESSLTYGDMVLTNDLSAVR). A PI3K/PI4K catalytic domain is found at 166–463 (GVEPLPVHSG…SVTERDVFSP (298 aa)). Residues 172-178 (VHSGLGG) form a G-loop region. Residues 173–179 (HSGLGGA), Lys-194, and 283–286 (QKFV) contribute to the ATP site. The tract at residues 316–324 (FNTDRHGGN) is catalytic loop. Residues 343-369 (PIDHGLCLPETLEDPYFEWIHWPQASL) form an activation loop region. ATP is bound at residue Asp-345. 2 disordered regions span residues 508-534 (SLGK…ENTV) and 560-595 (STSM…KSAN). Residues 516–529 (IKEEEEDEEEEEDK) show a composition bias toward acidic residues. Composition is skewed to polar residues over residues 560-569 (STSMKNTHLS) and 585-595 (ENTSSGHKSAN). Ser-593 carries the phosphoserine modification.

The protein belongs to the PI3/PI4-kinase family. Type II PI4K subfamily.

The catalysed reaction is a 1,2-diacyl-sn-glycero-3-phospho-(1D-myo-inositol) + ATP = a 1,2-diacyl-sn-glycero-3-phospho-(1D-myo-inositol 4-phosphate) + ADP + H(+). In terms of biological role, the phosphorylation of phosphatidylinositol (PI) to PI4P is the first committed step in the generation of phosphatidylinositol 4,5-bisphosphate (PIP2), a precursor of the second messenger inositol 1,4,5-trisphosphate (InsP3). Undergoes autophosphorylation and phosphorylates serine/threonine residues of protein substrates. The sequence is that of Phosphatidylinositol 4-kinase gamma 7 from Arabidopsis thaliana (Mouse-ear cress).